The primary structure comprises 596 residues: Bromodomain-containing protein 9 (596 aa).

The segment covering 1-10 (MGKKHKKHKS) has biased composition (basic residues). Disordered regions lie at residues 1–31 (MGKK…QYYV) and 49–119 (EVTE…SEGE). Over residues 61 to 73 (SFYEDRSDHERER) the composition is skewed to basic and acidic residues. Residues 74–84 (HKEKKKKKKKK) are compositionally biased toward basic residues. Over residues 85–98 (SEKEKDKYLDEDER) the composition is skewed to basic and acidic residues. Over residues 99-109 (RRRKEEKKRKR) the composition is skewed to basic residues. The region spanning 148 to 252 (NESTPLQQLL…HTGFKMMSKQ (105 aa)) is the Bromo domain. The segment at 226–228 (TYN) is histone H4K5ac H4K8ac and histone H4K5bu H4K8bu binding. Positions 537 to 547 (DFHDVHNDRGG) are enriched in basic and acidic residues. The interval 537–596 (DFHDVHNDRGGSRPSSSSSVSNNSERDHHLGSPSRISVGEQQDIHDPYEFLQSPETENQN) is disordered. Positions 548–559 (SRPSSSSSVSNN) are enriched in low complexity.

Binds acetylated histones H3 and H4. Binds butyrylated histone H4.

It localises to the nucleus. Plays a role in chromatin remodeling and regulation of transcription. Acts as a chromatin reader that recognizes and binds acylated histones: binds histones that are acetylated and/or butyrylated. The sequence is that of Bromodomain-containing protein 9 (brd9) from Xenopus tropicalis (Western clawed frog).